The following is a 214-amino-acid chain: Ribosomal RNA small subunit methyltransferase G (214 aa).

S-adenosyl-L-methionine-binding positions include G58, 109-110 (AE), and R126.

The protein belongs to the methyltransferase superfamily. RNA methyltransferase RsmG family.

It is found in the cytoplasm. Its function is as follows. Specifically methylates the N7 position of a guanine in 16S rRNA. The polypeptide is Ribosomal RNA small subunit methyltransferase G (Ureaplasma parvum serovar 3 (strain ATCC 700970)).